A 254-amino-acid polypeptide reads, in one-letter code: MTNRLQGKVALVTGGASGVGLEVVKLLLGEGAKVAFSDINEAAGQQLAAELGERSMFVRHDVSSEADWTLVMAAVQRRLGTLNVLVNNAGILLPGDMETGRLEDFSRLLKINTESVFIGCQQGIAAMKETGGSIINMASVSSWLPIEQYAGYSASKAAVSALTRAAALSCRKQGYAIRVNSIHPDGIYTPMMQASLPKGVSKEMVLHDPKLNRAGRAYMPERIAQLVLFLASDESSVMSGSELHADNSILGMGL.

Residues 12 to 40 and D61 contribute to the NAD(+) site; that span reads VTGGASGVGLEVVKLLLGEGAKVAFSDIN. S139 contributes to the substrate binding site. The active-site Proton acceptor is Y152. K156 contacts NAD(+).

It belongs to the short-chain dehydrogenases/reductases (SDR) family. Homotetramer.

The enzyme catalyses testosterone + NAD(+) = androst-4-ene-3,17-dione + NADH + H(+). It catalyses the reaction testosterone + NADP(+) = androst-4-ene-3,17-dione + NADPH + H(+). The protein is 3-beta-hydroxysteroid dehydrogenase of Comamonas testosteroni (Pseudomonas testosteroni).